Consider the following 144-residue polypeptide: Large ribosomal subunit protein uL15 (144 aa).

The disordered stretch occupies residues 1–52 (MRLNTLSPAEGAKHAPKRVGRGIGSGLGKTGGRGHKGQKSRSGGGVRRGFEG). The span at 21–31 (RGIGSGLGKTG) shows a compositional bias: gly residues.

Belongs to the universal ribosomal protein uL15 family. Part of the 50S ribosomal subunit.

Binds to the 23S rRNA. This chain is Large ribosomal subunit protein uL15, found in Buchnera aphidicola subsp. Acyrthosiphon kondoi (Acyrthosiphon kondoi symbiotic bacterium).